A 137-amino-acid polypeptide reads, in one-letter code: 2-iminobutanoate/2-iminopropanoate deaminase (137 aa).

The residue at position 2 (S2) is an N-acetylserine. 3 positions are modified to N6-succinyllysine: K13, K60, and K67. T74 is modified (phosphothreonine). Position 136 is a phosphoserine (S136).

The protein belongs to the RutC family. Homotrimer. Interacts with YTHDF2. As to expression, expressed predominantly in liver and kidney. Lower levels in lung and brain.

The protein localises to the cytoplasm. It localises to the nucleus. It is found in the peroxisome. The protein resides in the mitochondrion. It catalyses the reaction 2-iminobutanoate + H2O = 2-oxobutanoate + NH4(+). The catalysed reaction is 2-iminopropanoate + H2O = pyruvate + NH4(+). Functionally, catalyzes the hydrolytic deamination of enamine/imine intermediates that form during the course of normal metabolism. May facilitate the release of ammonia from these potentially toxic reactive metabolites, reducing their impact on cellular components. It may act on enamine/imine intermediates formed by several types of pyridoxal-5'-phosphate-dependent dehydratases including L-threonine dehydratase. In terms of biological role, also promotes endoribonucleolytic cleavage of some transcripts by promoting recruitment of the ribonuclease P/MRP complex. Acts by bridging YTHDF2 and the ribonuclease P/MRP complex. RIDA/HRSP12 binds to N6-methyladenosine (m6A)-containing mRNAs containing a 5'-GGUUC-3' motif: cooperative binding of RIDA/HRSP12 and YTHDF2 to such transcripts lead to recruitment of the ribonuclease P/MRP complex and subsequent endoribonucleolytic cleavage. The protein is 2-iminobutanoate/2-iminopropanoate deaminase of Homo sapiens (Human).